Reading from the N-terminus, the 268-residue chain is Ribosomal RNA small subunit methyltransferase A (268 aa).

6 residues coordinate S-adenosyl-L-methionine: Asn-18, Leu-20, Gly-45, Glu-66, Asp-91, and Asn-112.

Belongs to the class I-like SAM-binding methyltransferase superfamily. rRNA adenine N(6)-methyltransferase family. RsmA subfamily.

Its subcellular location is the cytoplasm. The enzyme catalyses adenosine(1518)/adenosine(1519) in 16S rRNA + 4 S-adenosyl-L-methionine = N(6)-dimethyladenosine(1518)/N(6)-dimethyladenosine(1519) in 16S rRNA + 4 S-adenosyl-L-homocysteine + 4 H(+). In terms of biological role, specifically dimethylates two adjacent adenosines (A1518 and A1519) in the loop of a conserved hairpin near the 3'-end of 16S rRNA in the 30S particle. May play a critical role in biogenesis of 30S subunits. This is Ribosomal RNA small subunit methyltransferase A from Shewanella baltica (strain OS223).